Consider the following 250-residue polypeptide: Ditrans,polycis-undecaprenyl-diphosphate synthase ((2E,6E)-farnesyl-diphosphate specific) (250 aa).

Residue D20 is part of the active site. Mg(2+) is bound at residue D20. Substrate is bound by residues 21 to 24 (GNGR), W25, R33, H37, and 65 to 67 (SSE). N68 (proton acceptor) is an active-site residue. Substrate contacts are provided by residues W69, R71, R188, and 194 to 196 (RIS). E207 serves as a coordination point for Mg(2+).

It belongs to the UPP synthase family. In terms of assembly, homodimer. It depends on Mg(2+) as a cofactor.

It catalyses the reaction 8 isopentenyl diphosphate + (2E,6E)-farnesyl diphosphate = di-trans,octa-cis-undecaprenyl diphosphate + 8 diphosphate. In terms of biological role, catalyzes the sequential condensation of isopentenyl diphosphate (IPP) with (2E,6E)-farnesyl diphosphate (E,E-FPP) to yield (2Z,6Z,10Z,14Z,18Z,22Z,26Z,30Z,34E,38E)-undecaprenyl diphosphate (di-trans,octa-cis-UPP). UPP is the precursor of glycosyl carrier lipid in the biosynthesis of bacterial cell wall polysaccharide components such as peptidoglycan and lipopolysaccharide. The protein is Ditrans,polycis-undecaprenyl-diphosphate synthase ((2E,6E)-farnesyl-diphosphate specific) of Vibrio cholerae serotype O1 (strain ATCC 39315 / El Tor Inaba N16961).